The sequence spans 228 residues: Cytidylate kinase (228 aa).

17–25 (GPTASGKGT) lines the ATP pocket.

The protein belongs to the cytidylate kinase family. Type 1 subfamily.

It is found in the cytoplasm. The enzyme catalyses CMP + ATP = CDP + ADP. It catalyses the reaction dCMP + ATP = dCDP + ADP. In Burkholderia multivorans (strain ATCC 17616 / 249), this protein is Cytidylate kinase.